Consider the following 97-residue polypeptide: Co-chaperonin GroES (97 aa).

It belongs to the GroES chaperonin family. In terms of assembly, heptamer of 7 subunits arranged in a ring. Interacts with the chaperonin GroEL.

Its subcellular location is the cytoplasm. Functionally, together with the chaperonin GroEL, plays an essential role in assisting protein folding. The GroEL-GroES system forms a nano-cage that allows encapsulation of the non-native substrate proteins and provides a physical environment optimized to promote and accelerate protein folding. GroES binds to the apical surface of the GroEL ring, thereby capping the opening of the GroEL channel. This Oleispira antarctica protein is Co-chaperonin GroES.